The primary structure comprises 354 residues: Nicotinate-nucleotide--dimethylbenzimidazole phosphoribosyltransferase (354 aa).

Glutamate 322 (proton acceptor) is an active-site residue.

It belongs to the CobT family.

The catalysed reaction is 5,6-dimethylbenzimidazole + nicotinate beta-D-ribonucleotide = alpha-ribazole 5'-phosphate + nicotinate + H(+). It functions in the pathway nucleoside biosynthesis; alpha-ribazole biosynthesis; alpha-ribazole from 5,6-dimethylbenzimidazole: step 1/2. Its function is as follows. Catalyzes the synthesis of alpha-ribazole-5'-phosphate from nicotinate mononucleotide (NAMN) and 5,6-dimethylbenzimidazole (DMB). In Solidesulfovibrio magneticus (strain ATCC 700980 / DSM 13731 / RS-1) (Desulfovibrio magneticus), this protein is Nicotinate-nucleotide--dimethylbenzimidazole phosphoribosyltransferase.